The primary structure comprises 266 residues: Phage-like element PBSX protein XkdC (266 aa).

124 to 131 (GQPGSGKT) provides a ligand contact to ATP.

It to B.subtilis YqaM.

Its function is as follows. May function as a transcriptional antiterminator. This chain is Phage-like element PBSX protein XkdC (xkdC), found in Bacillus subtilis (strain 168).